A 52-amino-acid chain; its full sequence is Small, acid-soluble spore protein K (52 aa).

The tract at residues 1–52 (MGKQAEFWSESKNNSKIDGQPKAKSRFASKRPNGTINTHPQERMRAANQQEE) is disordered.

The protein belongs to the SspK family.

The protein resides in the spore core. This is Small, acid-soluble spore protein K from Bacillus anthracis (strain A0248).